A 304-amino-acid polypeptide reads, in one-letter code: MAETNPELSDLMAQTNKKIVPKFTEIFPVEDVNYPYSAFIASVRKDVIKHCTDHKGIFQPVLPPEKKVPELWFYTELKTRTSSITLAIRMDNLYLVGFRTPGGVWWEFGKAGDTHLLGDNPRWLGFGGRYQDLIGNKGLETVTMGRAEMTRAVNDLAKKKKMATLEEEEVQMQMQMPEAAELAAAAAAADPQADTKSKLVKLVVMVCEGLRFNTVSRTVDAGFNSQHGVTLTVTQGKQVQKWDRISKAAFEWADHPTAVIPDMQKLGIKDKNEAARIVALVKNQTTAAAAAATAASADNDDDEA.

Glutamate 208 is an active-site residue.

Belongs to the ribosome-inactivating protein family. Type 1 RIP subfamily. As to quaternary structure, monomer. As to expression, accumulates to high levels in seeds.

It localises to the cytoplasm. It catalyses the reaction Endohydrolysis of the N-glycosidic bond at one specific adenosine on the 28S rRNA.. Its function is as follows. Possesses features of some constitutive defense agent. The coordinate Opaque-2-controlled synthesis of this protein and the major seed storage proteins (zeins) may provide the germinating seedling with both nutritional benefits and protection against pathogen invasion of the surrounding endosperm. In Zea mays (Maize), this protein is Ribosome-inactivating protein 9 (CRIP9).